We begin with the raw amino-acid sequence, 729 residues long: Monosaccharide-sensing protein 2 (729 aa).

The next 6 membrane-spanning stretches (helical) occupy residues 1–21, 47–67, 81–101, 104–124, 139–159, and 165–185; these read MSGA…QGWD, LIVA…GGVA, ILYF…VLLL, LLDG…ISET, FTGS…SLMP, and LMLG…VFFL. The segment covering 347–363 has biased composition (acidic residues); it reads VGEGEDYPSDHGDDSED. Disordered stretches follow at residues 347-367 and 423-442; these read VGEG…DLHS and ERED…RRGS. Residues 423–434 are compositionally biased toward basic and acidic residues; that stretch reads EREDESGQKEEG. A phosphoserine mark is found at serine 438 and glycine 448. The next 6 helical transmembrane spans lie at 507 to 527, 553 to 573, 585 to 605, 610 to 630, 650 to 670, and 679 to 699; these read ALVV…NGVL, ASLL…AVAM, LLTT…SNLV, IVHA…FVMG, ICIA…TYSL, and LAGV…FVFI.

It belongs to the major facilitator superfamily. Sugar transporter (TC 2.A.1.1) family. In terms of tissue distribution, mostly expressed in roots and stems, and, to a lower extent, in juvenile and adult leaves, and in flower tissues.

The protein resides in the vacuole membrane. It carries out the reaction D-glucose(out) + H(+)(in) = D-glucose(in) + H(+)(out). The catalysed reaction is sucrose(out) + H(+)(in) = sucrose(in) + H(+)(out). Functionally, sugar proton-coupled antiporter which contributes to vacuolar sugar import (e.g. monosaccharides including glucose, sucrose and fructose), particularly during stress responses (e.g. in response to cold). The protein is Monosaccharide-sensing protein 2 of Arabidopsis thaliana (Mouse-ear cress).